The sequence spans 156 residues: Small ribosomal subunit protein uS7 (156 aa).

This sequence belongs to the universal ribosomal protein uS7 family. As to quaternary structure, part of the 30S ribosomal subunit. Contacts proteins S9 and S11.

In terms of biological role, one of the primary rRNA binding proteins, it binds directly to 16S rRNA where it nucleates assembly of the head domain of the 30S subunit. Is located at the subunit interface close to the decoding center, probably blocks exit of the E-site tRNA. The sequence is that of Small ribosomal subunit protein uS7 from Methylorubrum extorquens (strain CM4 / NCIMB 13688) (Methylobacterium extorquens).